The sequence spans 726 residues: Pre-mRNA-splicing factor CLF1 (726 aa).

HAT repeat units lie at residues 55–87 (EFQA…WEAS), 89–121 (NEYE…MELK), 123–155 (RNIN…LEEL), 157–188 (LNVS…LEER), 190–221 (NELD…FEED), 223–262 (GQPD…METR), 264–298 (KEFE…FEKQ), 308–340 (TVLG…LEED), 352–386 (VEPM…LWLQ), 396–432 (KDYD…FEIR), 434–465 (LDVS…LEMR), 467–499 (REFD…VESA), 501–534 (EDFE…FEAG), 536–567 (GERE…MEIA), 585–626 (GDAD…EHGD), and 635–667 (DMLP…DDER). The disordered stretch occupies residues 682–726 (AWAQQRAGQGEEGGLSYDLPSDSEDENEDGDEDGDGREEEGMDQD). The span at 702-726 (SDSEDENEDGDEDGDGREEEGMDQD) shows a compositional bias: acidic residues.

Belongs to the crooked-neck family. In terms of assembly, associated with the spliceosome.

Its subcellular location is the nucleus. Functionally, involved in pre-mRNA splicing and cell cycle progression. Required for the spliceosome assembly and initiation of the DNA replication. This Cryptococcus neoformans var. neoformans serotype D (strain B-3501A) (Filobasidiella neoformans) protein is Pre-mRNA-splicing factor CLF1 (CLF1).